Here is a 321-residue protein sequence, read N- to C-terminus: tRNA dimethylallyltransferase (321 aa).

Position 24-31 (24-31 (GPTASGKS)) interacts with ATP. A substrate-binding site is contributed by 26-31 (TASGKS). Interaction with substrate tRNA stretches follow at residues 49–52 (DSMQ) and 172–176 (QRIVR).

It belongs to the IPP transferase family. In terms of assembly, monomer. Requires Mg(2+) as cofactor.

The catalysed reaction is adenosine(37) in tRNA + dimethylallyl diphosphate = N(6)-dimethylallyladenosine(37) in tRNA + diphosphate. Functionally, catalyzes the transfer of a dimethylallyl group onto the adenine at position 37 in tRNAs that read codons beginning with uridine, leading to the formation of N6-(dimethylallyl)adenosine (i(6)A). This is tRNA dimethylallyltransferase from Mesorhizobium japonicum (strain LMG 29417 / CECT 9101 / MAFF 303099) (Mesorhizobium loti (strain MAFF 303099)).